A 238-amino-acid chain; its full sequence is Ribonuclease PH (238 aa).

Phosphate is bound by residues Arg-86 and 124-126; that span reads GTR.

The protein belongs to the RNase PH family. As to quaternary structure, homohexameric ring arranged as a trimer of dimers.

It catalyses the reaction tRNA(n+1) + phosphate = tRNA(n) + a ribonucleoside 5'-diphosphate. Functionally, phosphorolytic 3'-5' exoribonuclease that plays an important role in tRNA 3'-end maturation. Removes nucleotide residues following the 3'-CCA terminus of tRNAs; can also add nucleotides to the ends of RNA molecules by using nucleoside diphosphates as substrates, but this may not be physiologically important. Probably plays a role in initiation of 16S rRNA degradation (leading to ribosome degradation) during starvation. This chain is Ribonuclease PH, found in Azorhizobium caulinodans (strain ATCC 43989 / DSM 5975 / JCM 20966 / LMG 6465 / NBRC 14845 / NCIMB 13405 / ORS 571).